A 182-amino-acid chain; its full sequence is Proline-rich protein, Y-linked (182 aa).

2 disordered regions span residues Met1–Asp22 and Val89–Gly108. Pro residues predominate over residues Ala91 to Gly108. The DUF1725 domain occupies Trp154–Gln167.

This chain is Proline-rich protein, Y-linked (PRORY), found in Homo sapiens (Human).